The sequence spans 148 residues: SsrA-binding protein (148 aa).

A disordered region spans residues 129 to 148 (ETEKDRDWQREKARLMREKA).

It belongs to the SmpB family.

It localises to the cytoplasm. Required for rescue of stalled ribosomes mediated by trans-translation. Binds to transfer-messenger RNA (tmRNA), required for stable association of tmRNA with ribosomes. tmRNA and SmpB together mimic tRNA shape, replacing the anticodon stem-loop with SmpB. tmRNA is encoded by the ssrA gene; the 2 termini fold to resemble tRNA(Ala) and it encodes a 'tag peptide', a short internal open reading frame. During trans-translation Ala-aminoacylated tmRNA acts like a tRNA, entering the A-site of stalled ribosomes, displacing the stalled mRNA. The ribosome then switches to translate the ORF on the tmRNA; the nascent peptide is terminated with the 'tag peptide' encoded by the tmRNA and targeted for degradation. The ribosome is freed to recommence translation, which seems to be the essential function of trans-translation. The sequence is that of SsrA-binding protein from Ralstonia nicotianae (strain ATCC BAA-1114 / GMI1000) (Ralstonia solanacearum).